A 369-amino-acid polypeptide reads, in one-letter code: 2-aminoethylphosphonate--pyruvate transaminase (369 aa).

N6-(pyridoxal phosphate)lysine is present on Lys193.

This sequence belongs to the class-V pyridoxal-phosphate-dependent aminotransferase family. PhnW subfamily. Homodimer. It depends on pyridoxal 5'-phosphate as a cofactor.

It carries out the reaction (2-aminoethyl)phosphonate + pyruvate = phosphonoacetaldehyde + L-alanine. In terms of biological role, involved in phosphonate degradation. The polypeptide is 2-aminoethylphosphonate--pyruvate transaminase (Pseudomonas fluorescens (strain Pf0-1)).